Here is a 248-residue protein sequence, read N- to C-terminus: 14-3-3 protein gamma-2 (248 aa).

The protein belongs to the 14-3-3 family. Homodimer, and heterodimer with other family members. In terms of tissue distribution, expressed in brain, gill, heart, intestine, kidney, liver, ovary, skeletal muscle, spleen and testis.

It localises to the cytoplasm. In terms of biological role, adapter protein implicated in the regulation of a large spectrum of both general and specialized signaling pathways. Binds to a large number of partners, usually by recognition of a phosphoserine or phosphothreonine motif. Binding generally results in the modulation of the activity of the binding partner. In Oncorhynchus mykiss (Rainbow trout), this protein is 14-3-3 protein gamma-2.